A 351-amino-acid polypeptide reads, in one-letter code: uncharacterized protein (351 aa).

This sequence belongs to the bacterial luciferase oxidoreductase family.

This is an uncharacterized protein from Sinorhizobium fredii (strain NBRC 101917 / NGR234).